The following is a 481-amino-acid chain: Glutamine synthetase (481 aa).

The GS beta-grasp domain occupies 22–106 (NEVEFVDFRF…VFCDVYDVYK (85 aa)). Residues 114–481 (PRSIAKKALQ…PFEFITTYSC (368 aa)) form the GS catalytic domain. Residues E139, E141, E223, and E230 each contribute to the Mg(2+) site. Residues 274–275 (NG) and G275 contribute to the L-glutamate site. H279 lines the Mg(2+) pocket. ATP-binding positions include 281 to 283 (HVS) and S283. Positions 331, 337, and 349 each coordinate L-glutamate. ATP-binding residues include R349 and R354. Residue E367 participates in Mg(2+) binding. R369 contacts L-glutamate.

The protein belongs to the glutamine synthetase family. Oligomer of 12 subunits arranged in the form of two hexameric ring. Mg(2+) serves as cofactor.

It is found in the cytoplasm. It carries out the reaction L-glutamate + NH4(+) + ATP = L-glutamine + ADP + phosphate + H(+). The activity of this enzyme could be controlled by adenylation under conditions of abundant glutamine. Catalyzes the ATP-dependent biosynthesis of glutamine from glutamate and ammonia. The chain is Glutamine synthetase from Helicobacter pylori (strain ATCC 700392 / 26695) (Campylobacter pylori).